A 155-amino-acid polypeptide reads, in one-letter code: MTIKVIEGDFKASTGKYALLVSRWNSFVVEHLKDGAIDTLRRHGISDENIEVIYAPGAFEFPLAAQKLADAKRYDAIIALGAVIRGGTPHFDYVAGECTKGLAQVSLNAGLPITFGVLTVDSIEQAIERSGTKAGNKGAEAASTALEMVSLISKI.

5-amino-6-(D-ribitylamino)uracil-binding positions include Trp24, 58-60 (AFE), and 82-84 (AVI). Position 87–88 (87–88 (GT)) interacts with (2S)-2-hydroxy-3-oxobutyl phosphate. His90 (proton donor) is an active-site residue. Phe115 provides a ligand contact to 5-amino-6-(D-ribitylamino)uracil. Position 129 (Arg129) interacts with (2S)-2-hydroxy-3-oxobutyl phosphate.

The protein belongs to the DMRL synthase family. As to quaternary structure, forms an icosahedral capsid composed of 60 subunits, arranged as a dodecamer of pentamers.

The enzyme catalyses (2S)-2-hydroxy-3-oxobutyl phosphate + 5-amino-6-(D-ribitylamino)uracil = 6,7-dimethyl-8-(1-D-ribityl)lumazine + phosphate + 2 H2O + H(+). Its pathway is cofactor biosynthesis; riboflavin biosynthesis; riboflavin from 2-hydroxy-3-oxobutyl phosphate and 5-amino-6-(D-ribitylamino)uracil: step 1/2. Its function is as follows. Catalyzes the formation of 6,7-dimethyl-8-ribityllumazine by condensation of 5-amino-6-(D-ribitylamino)uracil with 3,4-dihydroxy-2-butanone 4-phosphate. This is the penultimate step in the biosynthesis of riboflavin. The polypeptide is 6,7-dimethyl-8-ribityllumazine synthase (Saccharophagus degradans (strain 2-40 / ATCC 43961 / DSM 17024)).